We begin with the raw amino-acid sequence, 197 residues long: NADH-quinone oxidoreductase subunit C (197 aa).

Belongs to the complex I 30 kDa subunit family. In terms of assembly, NDH-1 is composed of 14 different subunits. Subunits NuoB, C, D, E, F, and G constitute the peripheral sector of the complex.

It is found in the cell inner membrane. The enzyme catalyses a quinone + NADH + 5 H(+)(in) = a quinol + NAD(+) + 4 H(+)(out). In terms of biological role, NDH-1 shuttles electrons from NADH, via FMN and iron-sulfur (Fe-S) centers, to quinones in the respiratory chain. The immediate electron acceptor for the enzyme in this species is believed to be ubiquinone. Couples the redox reaction to proton translocation (for every two electrons transferred, four hydrogen ions are translocated across the cytoplasmic membrane), and thus conserves the redox energy in a proton gradient. In Caulobacter vibrioides (strain ATCC 19089 / CIP 103742 / CB 15) (Caulobacter crescentus), this protein is NADH-quinone oxidoreductase subunit C.